Reading from the N-terminus, the 172-residue chain is Agamous-like MADS-box protein AGL29 (172 aa).

An MADS-box domain is found at 1–61; sequence MGRRKIKMEM…GKPFSYGKPN (61 aa). Residues 86-123 adopt a coiled-coil conformation; it reads NYRPKLKRLSERLDLLNQEVEAEKERGEKSQEKLESAG. Residues 106–125 are disordered; the sequence is EAEKERGEKSQEKLESAGDE.

In terms of tissue distribution, expressed in pollen.

It localises to the nucleus. Functionally, probable transcription factor. In Arabidopsis thaliana (Mouse-ear cress), this protein is Agamous-like MADS-box protein AGL29.